The sequence spans 332 residues: Cytoplasmic phosphatidylinositol transfer protein 1 (332 aa).

Ser-119, Ser-122, Ser-270, and Ser-274 each carry phosphoserine. Over residues 272–281 (PSSAPSTPLS) the composition is skewed to low complexity. The tract at residues 272–332 (PSSAPSTPLS…SEKPCRPKSE (61 aa)) is disordered. Thr-278 is modified (phosphothreonine).

Belongs to the PtdIns transfer protein family. PI transfer class IIB subfamily. Widely expressed in brain, with expression in the gray matters of pre- and postnatal brains. As to expression, weakly expressed in brain and is rather confined to the embryonic stage.

The protein resides in the cytoplasm. It is found in the nucleus. The catalysed reaction is a 1,2-diacyl-sn-glycero-3-phospho-(1D-myo-inositol)(in) = a 1,2-diacyl-sn-glycero-3-phospho-(1D-myo-inositol)(out). It catalyses the reaction a 1,2-diacyl-sn-glycero-3-phosphate(in) = a 1,2-diacyl-sn-glycero-3-phosphate(out). Functionally, catalyzes the transfer of phosphatidylinositol (PI) and phosphatidic acid (PA) between membranes. Binds PA derived from the phospholipase D signaling pathway and among the cellular PA species, preferably binds to the C16:0/16:1 and C16:1/18:1 PA species. In terms of biological role, specifically binds to phosphatidylinositol but not to other phospholipids and may play a role in the phosphoinositide-mediated signaling in the neural development. This is Cytoplasmic phosphatidylinositol transfer protein 1 (Pitpnc1) from Mus musculus (Mouse).